A 222-amino-acid polypeptide reads, in one-letter code: Chymotrypsin-1 (222 aa).

Positions 1–221 (IVGGKDAPVG…FVSWINANLK (221 aa)) constitute a Peptidase S1 domain. Cysteines 26 and 42 form a disulfide. Active-site charge relay system residues include histidine 41 and aspartate 87. Cystine bridges form between cysteine 151–cysteine 164 and cysteine 174–cysteine 198. The active-site Charge relay system is the serine 178.

The protein belongs to the peptidase S1 family.

It is found in the secreted. It localises to the extracellular space. The catalysed reaction is Preferential cleavage: Tyr-|-Xaa, Trp-|-Xaa, Phe-|-Xaa, Leu-|-Xaa.. The sequence is that of Chymotrypsin-1 from Solenopsis invicta (Red imported fire ant).